A 562-amino-acid chain; its full sequence is Bacillolysin (562 aa).

The first 24 residues, 1–24, serve as a signal peptide directing secretion; sequence MKKKKQALKVLLSVGILSSSFAFA. A propeptide spans 25–245 (activation peptide); that stretch reads HTSSAAPNNV…KQAAKPAAKP (221 aa). Ca(2+) is bound by residues D303, D305, and D384. A Zn(2+)-binding site is contributed by H388. E389 is a catalytic residue. The Zn(2+) site is built by H392 and E412. Residues E423, N429, D431, E433, E436, Y439, T440, and D446 each contribute to the Ca(2+) site. The Proton donor role is filled by H477.

This sequence belongs to the peptidase M4 family. Requires Ca(2+) as cofactor. Zn(2+) is required as a cofactor.

It is found in the secreted. The enzyme catalyses Similar, but not identical, to that of thermolysin.. Extracellular zinc metalloprotease. The chain is Bacillolysin (nprM) from Priestia megaterium (strain DSM 319 / IMG 1521) (Bacillus megaterium).